A 370-amino-acid chain; its full sequence is Mesoderm posterior protein 2 (370 aa).

3 disordered regions span residues 51–89 (PSQP…EREK), 231–265 (SLER…HWTQ), and 325–350 (TSED…GLQL). The segment covering 57-77 (PARSTRTTQATAPRRTRPAPA) has biased composition (low complexity). The 55-residue stretch at 79–133 (GQRQSASEREKLRMRTLARALQELRRFLPPSVAPAGQSLTKIETLRLAIRYIGHL) folds into the bHLH domain. Polar residues predominate over residues 325 to 334 (TSEDQGSSPA). Residues 326–330 (SEDQG) form a may contain a degradation domain region.

In terms of processing, degraded by the proteasome. Phosphorylated.

It is found in the nucleus. Its function is as follows. Transcription factor with important role in somitogenesis. Defines the rostrocaudal patterning of the somite by participating in distinct Notch pathways. Also regulates the FGF signaling pathway. Specifies the rostral half of the somites. Generates rostro-caudal polarity of somites by down-regulating in the presumptive rostral domain DLL1, a Notch ligand. Participates in the segment border formation by activating in the anterior presomitic mesoderm LFNG, a negative regulator of DLL1-Notch signaling. Acts as a strong suppressor of Notch activity. Together with MESP1 is involved in the epithelialization of somitic mesoderm and in the development of cardiac mesoderm. May play a role with Tcf15 in the differentiation of myotomal and sclerotomal cells by regulating Pax family genes. Also controls the expression of the protocadherin PCDH8/PAPC, EPHA4, RIPPLY2, NOTCH2, FGFR1, and CER1. Binds to the E-boxes within the EPH4A and RIPPLY2 enhancers. In Mus musculus (Mouse), this protein is Mesoderm posterior protein 2 (Mesp2).